A 143-amino-acid polypeptide reads, in one-letter code: Large ribosomal subunit protein uL11 (143 aa).

Belongs to the universal ribosomal protein uL11 family. As to quaternary structure, part of the ribosomal stalk of the 50S ribosomal subunit. Interacts with L10 and the large rRNA to form the base of the stalk. L10 forms an elongated spine to which L12 dimers bind in a sequential fashion forming a multimeric L10(L12)X complex. In terms of processing, one or more lysine residues are methylated.

Forms part of the ribosomal stalk which helps the ribosome interact with GTP-bound translation factors. The protein is Large ribosomal subunit protein uL11 of Variovorax paradoxus (strain S110).